A 311-amino-acid chain; its full sequence is Forkhead box protein R2 (311 aa).

2 disordered regions span residues 56-76 and 90-171; these read PPEM…PCEP and LGSQ…QSPE. Residues 115–128 show a composition bias toward basic and acidic residues; that stretch reads QKDEGSNCSEDKVV. Residues 129 to 143 show a composition bias toward low complexity; sequence ESLPSSSSEQSPLQK. Residues 153–164 show a composition bias toward acidic residues; it reads ELTEEEAEEPDD. Positions 192–294 form a DNA-binding region, fork-head; it reads RPPLNCSHLI…RVLAFAQRER (103 aa).

As to expression, expressed in breast cancer cell lines and primary cancer.

It is found in the nucleus. The sequence is that of Forkhead box protein R2 (FOXR2) from Homo sapiens (Human).